We begin with the raw amino-acid sequence, 284 residues long: uncharacterized protein (284 aa).

The signal sequence occupies residues 1–24 (MLYSRESRTTVLFLALVTSLTVLC). Topologically, residues 25-84 (HSVDVTTVFTTSTITEITTVTAAPQPQNKAETALNTATNIIQTMQFLFNCAPFKWKGPLK) are cytoplasmic. The helical transmembrane segment at 85 to 104 (ITSCALNFIVLLLTAWGYLL) threads the bilayer. At 105–284 (KYLQENKLNS…SVHMYSSSLL (180 aa)) the chain is on the extracellular side. Asn270 is a glycosylation site (N-linked (GlcNAc...) asparagine).

To yeast YNL019c.

The protein localises to the cell membrane. This is an uncharacterized protein from Saccharomyces cerevisiae (strain ATCC 204508 / S288c) (Baker's yeast).